A 669-amino-acid polypeptide reads, in one-letter code: MPGMVLFGRRWSLASDDLVFPGSFELFLRVLWWIVSLTLYLTHRRRLDCPGGVLLSTYLIVLLVLLAVIICTVLAIVCVSMRGTICNPGPRKSMSKLLYIRLALFLPEMVWASLGAAWVAKGIQCDRTVVIGIIATVIVSWIVIAATMVTIIFVFDPLGGKMAPYPPCIPEHLDSNSSNRLLTGLKTAAKSVWETRVQFCCCCVGQDDNTRVAFSSTADLFSTYFSDTDLVPSDIAAGFTLLHQQQDNISHSREPPEVVTHTPGQPQETELDAEVENCHHYMPFAAAAYGWPLYIYRNPFTGLCRIGGDCCRARDIEYDAVEGDQHNCHFASILKTTGLQYRDFIHISFHDKVYELPFIVVLDHRKESVVVAVRGTMSLQDVLTDLSAESETLELGIELQDCVAHKGIAQAARYIHRRLVNDGILSQAFSVAPEYQLVLVGHSLGAGAAALLAIMLRGAYPQVRAYAFSPPRGLLSKSLYEYSKDFVVSLILGMDVIPRLSVTNMEDLKRRILRVIANCNKPKYKILLHGCWYGLFGGSPDNFPTELDEGTQGALTQPLLGEQTLLTRYSPGYCSSDSPLDSPTKYPTLYPPGRIIHLEEEGGSGRFGCCSAAQYRARWAHEAEFSKILIGPKMLIDHMPDVMIRALDRVLADRTACVSCPGQGGSSVP.

Over 1–17 (MPGMVLFGRRWSLASDD) the chain is Cytoplasmic. Residues 18-38 (LVFPGSFELFLRVLWWIVSLT) traverse the membrane as a helical segment. Over 39–58 (LYLTHRRRLDCPGGVLLSTY) the chain is Extracellular. Residues 59–79 (LIVLLVLLAVIICTVLAIVCV) traverse the membrane as a helical segment. Residues 80–102 (SMRGTICNPGPRKSMSKLLYIRL) are Cytoplasmic-facing. A helical transmembrane segment spans residues 103–123 (ALFLPEMVWASLGAAWVAKGI). At 124-128 (QCDRT) the chain is on the extracellular side. The chain crosses the membrane as a helical span at residues 129–149 (VVIGIIATVIVSWIVIAATMV). Residues 150-669 (TIIFVFDPLG…CPGQGGSSVP (520 aa)) lie on the Cytoplasmic side of the membrane. Active-site charge relay system residues include Ser-443 and Asp-495. Ser-570, Ser-578, and Ser-582 each carry phosphoserine.

Belongs to the AB hydrolase superfamily. Lipase family. Ca(2+) serves as cofactor. In terms of tissue distribution, expressed in liver and immune cells such as macrophages and microglias. In embryonic brains present in axonal tracts, while in adults localizes to dendritic fields, correlating with the developmental change in requirement for 2-AG synthesis from the pre- to the postsynaptic compartment (at protein level).

It is found in the cell membrane. The enzyme catalyses a 1,2-diacyl-sn-glycerol + H2O = a 2-acylglycerol + a fatty acid + H(+). It catalyses the reaction 1-octadecanoyl-2-(5Z,8Z,11Z,14Z-eicosatetraenoyl)-sn-glycerol + H2O = 2-(5Z,8Z,11Z,14Z-eicosatetraenoyl)-glycerol + octadecanoate + H(+). It carries out the reaction 1,2-di-(9Z-octadecenoyl)-sn-glycerol + H2O = 2-(9Z-octadecenoyl)-glycerol + (9Z)-octadecenoate + H(+). The catalysed reaction is 1-(9Z-octadecenoyl)-2-(5Z,8Z,11Z,14Z-eicosatetraenoyl)-sn-glycerol + H2O = 2-(5Z,8Z,11Z,14Z-eicosatetraenoyl)-glycerol + (9Z)-octadecenoate + H(+). The enzyme catalyses 1-(9Z-octadecenoyl)-2-octadecanoyl-sn-glycerol + H2O = 2-octadecanoylglycerol + (9Z)-octadecenoate + H(+). It catalyses the reaction 1-(9Z-octadecenoyl)-2-(9Z,12Z-octadecadienoyl)-sn-glycerol + H2O = 2-(9Z,12Z-octadecadienoyl)-glycerol + (9Z)-octadecenoate + H(+). It carries out the reaction 1-(9Z-octadecenoyl)-2-O-(5Z,8Z,11Z,14Z-eicosatetraenyl)-sn-glycerol + H2O = 2-O-(5Z,8Z,11Z,14Z)-eicosatetraenylglycerol + (9Z)-octadecenoate + H(+). The catalysed reaction is a triacylglycerol + H2O = a diacylglycerol + a fatty acid + H(+). The enzyme catalyses 1,2,3-tri-(5Z,8Z,11Z,14Z-eicosatetraenoyl)-glycerol + H2O = 1,2-di-(5Z,8Z,11Z,14Z-eicosatetraenoyl)-glycerol + (5Z,8Z,11Z,14Z)-eicosatetraenoate + H(+). It catalyses the reaction 1,2,3-(4Z,7Z,10Z,13Z,16Z,19Z-docosahexaenoyl)-glycerol + H2O = 1,2-di-(4Z,7Z,10Z,13Z,16Z,19Z-docosahexaenoyl)-glycerol + (4Z,7Z,10Z,13Z,16Z,19Z)-docosahexaenoate + H(+). With respect to regulation, inhibited by the 1,2,3-triazole urea covalent inhibitors KT109 and KT172. Inhibited by p-hydroxy-mercuri-benzoate and HgCl(2), but not by PMSF. Also inhibited by RHC80267, a drug that blocks 2-AG formation. Functionally, lipase that catalyzes the hydrolysis of arachidonic acid (AA)-esterified diacylglycerols (DAGs) to produce the principal endocannabinoid, 2-arachidonoylglycerol (2-AG) which can be further cleaved by downstream enzymes to release arachidonic acid (AA) for cyclooxygenase (COX)-mediated eicosanoid production. Preferentially hydrolyzes DAGs at the sn-1 position in a calcium-dependent manner and has negligible activity against other lipids including monoacylglycerols and phospholipids. Plays a key role in the regulation of 2-AG and AA pools utilized by COX1/2 to generate lipid mediators of macrophage and microglia inflammatory responses. Also functions as a polyunsaturated fatty acids-specific triacylglycerol lipase in macrophages. Plays an important role to support the metabolic and signaling demands of macrophages. The chain is Diacylglycerol lipase-beta (Daglb) from Mus musculus (Mouse).